We begin with the raw amino-acid sequence, 326 residues long: N-acetyl-gamma-glutamyl-phosphate reductase (326 aa).

The active site involves C155.

This sequence belongs to the NAGSA dehydrogenase family. Type 1 subfamily.

Its subcellular location is the cytoplasm. The enzyme catalyses N-acetyl-L-glutamate 5-semialdehyde + phosphate + NADP(+) = N-acetyl-L-glutamyl 5-phosphate + NADPH + H(+). It participates in amino-acid biosynthesis; L-arginine biosynthesis; N(2)-acetyl-L-ornithine from L-glutamate: step 3/4. Functionally, catalyzes the NADPH-dependent reduction of N-acetyl-5-glutamyl phosphate to yield N-acetyl-L-glutamate 5-semialdehyde. In Shewanella denitrificans (strain OS217 / ATCC BAA-1090 / DSM 15013), this protein is N-acetyl-gamma-glutamyl-phosphate reductase.